A 2326-amino-acid chain; its full sequence is MSGTVSAAAGLRPLLETLQDPAAPAGDLTDAHLSLVNRLSGEEGREFVAAVRKHFPRLCKVFKAHISSENSELSNAALQALGFCVFNSKITSELSASEVEDLLSTLNSIAVKTSDKNTRTRALWVISKQTFPSEIIKKEVSSLISTLETILTKGDVQSMIVEYEALNVVIRLMEQAPAQMGEEAVRWAKLIIPLVVHSAHKVQLRGATALEIGMPLLLQKQQEVAAVTEHLMTTKLISELQKLFSTKNETYVLKLWPLFVKLLGKTLHRSGSFINSLLQLEELGFRSGSPVVKKIAFIAWKSLIDNFALNPDILCSAKRLKLLMQPLSSIHVRTEALALTKLEVWWYLLMRLGPQLPANFEQVCIPLIQSTLSVDSAAALQGTPSRVPSNPNSANPPQKPGPYPFASPATPRMNLNSSTAGLVAIPSIQLLGIEMLLHFLMGPEVLEFAKRNKLVLSLEPLQHPLISSPSFFCKHASTFINAVQDGFIAVGKEVPESMLNSIWKDINGHVKAAIESGNKKEKQGSEVLTMLLQALKNIVRSNSLPVQKILSLIDITVKELPPKVLGSPAYQIADMDLLNGTPALFLVQLPFHNNLLEWCVTDERFFIILETLMRYVLSGPTSLLAFSESVLCVINQNAKQVENKEHLWRMWSIVVNPLTDWINRTNEVNQGDALEHNFNAVYNALLLPVSHIFPVQEFPQPTMKSLLRAWSDLYRAFARCAALVATAEENLCCEELCAKIISGLEGETPVMSAMLDGLTHVVAVMVDCINFAPYGTKYQPKNRSPQTPTDWSKKKREPLGKLSSLFKLLVMLLDSFHALSSEETCPEPLASVGHSLIAVLHNIISHVSLPSMIGTMFAVFSKPLAVFYEKTKLADVPKAYSNLNSKLEKLLAEIILCLQSHCMGCYDSELLEQLSPLLCVIFQHKSKQMRKQCANFWNTTFAKAASLTYPEELKPVLSQAKQKMPLLLPGFESIEIADEQSGPFSDEAENSQWDAKLSGMEVNLGQKRDSILAQTGELKNEVKDKSDNVQVTSAKLKLEFSASKPKSDVLLEEEKSVDFVFIPPETKARILTEHQKEVLRSKRVGIPAMYNNLDSSQDTTLFSQYTQSQEDSLEKSPLENAKEDFKNNPQEENGKSESCIADSDGNTGDCKVDNPLEDVKEKSAYHIEKNSNSEEESSRGDRTGIIGEESSVGEALEKSGTETASKESLVGNENTSAISCSSTSSDVICGTPQPASRRQSFITLEKFDSSESRPFSPSALNSVSEVSQSAPVPDKQGNINVCKTGRKPGKSGEESRKSSQSEQISAAKRRLTRRQSKMEQQGNQQAKLVTNSEQEKGAQESFVSNSVENSPESPCSMEDTERVLTAQPQPVSSPEPDIKKAEAVMAEIEKVRAFEMDSKENTPPKTAVSSEQVMGDGSQGPHASLSQKTLRRSSRRRSENAEMAAGSQDKEDGYQKKDKRKEDEKALQKKVPQTKEDASQKQKAVCGKASEHAIKKESSLPERSAAEDLGSKEPPAAKGADEEANRSAGKPEDTLKSDSEGQDCSSDTVSEKKRERPRYHTRRSSQGLLSSIENAEADGSETKKESLKKKSGKTKNKSDSLEGKRKDVQPESQSHGVSSQVDESKNLSGMNESELSSEVSTDAALMSAPSDVKNQVLLAGADEAEGSASSRTSPSTQNVSVEQSKAGVLPESFSDPRVSDEVLKGDENKCIEKQSSVEQHSSVQPENVQGANTSGSDLSSLQMQDCQHKRSKRVRKAKSCDCCSKRVKQQTSLSESKSEDPRELIEPQATPVQMAVSTAEVSGSSNLEESLSITPCAMSTPLPPAKESGMLSLERERTGEDNLQGNSGVMKEEAENPAHTAGEVSDPVVEIKVKEEVDGNDRAEQCVSVSECASDEPSDSSVAAGDQSEEKAAVEKEEESQHGEMEEVPEADGSKPETKQMDELEGNRDGKEEAENALEEVCITPDNEMREELLEAEITVPENVAVGNKDVVVENKSADSPQKPEGLDSFTSVNGSPSGVQARCTWSPSASPSTSILKRGVKRHHEDDSLSPANKIRRVSFANPIYQEGLADDIDRRSPVIRSHSSPSSRSLKILSNIQTKHITTPTKGFLSPGSRNPKFKSSKKCLMTEMVKESLPSPTECVYPALAGCKAPVDVILPQITSNICARGLGQLIRAKNIKTVGDLSALTASEIKTLPIRSPKVSNVKKALRGYHEQQVKSRGCEEIGALEDGERTVNSAEDKSPPVDEEKLATDLGEAIALSSSSPPPADLLSQMDLLAAQLTSEDLRSYPGSRLFEMQEKLASMSDCIMKTLRSRWRSPPHDSAE.

3 disordered regions span residues 381 to 410 (QGTP…SPAT), 1105 to 1965 (YTQS…CITP), and 1993 to 2050 (VENK…DDSL). Over residues 382–396 (GTPSRVPSNPNSANP) the composition is skewed to polar residues. 2 stretches are compositionally biased toward basic and acidic residues: residues 1112–1126 (SLEK…EDFK) and 1150–1182 (CKVD…RGDR). Low complexity predominate over residues 1216 to 1225 (SAISCSSTSS). Polar residues-rich tracts occupy residues 1233 to 1242 (QPASRRQSFI) and 1252 to 1270 (SRPF…SQSA). The segment covering 1290–1299 (KSGEESRKSS) has biased composition (basic and acidic residues). Composition is skewed to polar residues over residues 1318–1332 (MEQQ…VTNS) and 1341–1353 (SFVS…SPES). The segment covering 1376 to 1402 (PDIKKAEAVMAEIEKVRAFEMDSKENT) has biased composition (basic and acidic residues). The span at 1403–1412 (PPKTAVSSEQ) shows a compositional bias: polar residues. 3 stretches are compositionally biased toward basic and acidic residues: residues 1448–1480 (QDKE…DASQ), 1489–1511 (ASEH…DLGS), and 1519–1539 (GADE…KSDS). Positions 1564–1573 (SSQGLLSSIE) are enriched in polar residues. The segment covering 1586–1595 (SLKKKSGKTK) has biased composition (basic residues). A compositionally biased stretch (basic and acidic residues) spans 1596-1609 (NKSDSLEGKRKDVQ). Composition is skewed to polar residues over residues 1610 to 1640 (PESQ…SEVS) and 1671 to 1683 (RTSP…SVEQ). Residues 1697–1712 (RVSDEVLKGDENKCIE) show a composition bias toward basic and acidic residues. Polar residues predominate over residues 1713-1745 (KQSSVEQHSSVQPENVQGANTSGSDLSSLQMQD). Residues 1776-1785 (SKSEDPRELI) show a composition bias toward basic and acidic residues. Residues 1795–1813 (AVSTAEVSGSSNLEESLSI) are compositionally biased toward polar residues. 3 stretches are compositionally biased toward basic and acidic residues: residues 1869–1884 (VEIK…DRAE), 1908–1925 (SEEK…HGEM), and 1932–1954 (DGSK…KEEA). The segment covering 2009-2036 (SFTSVNGSPSGVQARCTWSPSASPSTSI) has biased composition (polar residues).

The protein belongs to the RIF1 family. In terms of assembly, interacts with TP53BP1 (when phosphorylated by ATM).

It localises to the nucleus. Its subcellular location is the chromosome. The protein localises to the telomere. It is found in the cytoplasm. The protein resides in the cytoskeleton. It localises to the spindle. Key regulator of TP53BP1 that plays a key role in the repair of double-strand DNA breaks (DSBs) in response to DNA damage: acts by promoting non-homologous end joining (NHEJ)-mediated repair of DSBs. In response to DNA damage, interacts with ATM-phosphorylated TP53BP1, allowing recruitment to DNA DSBs. Once recruited to DSBs, RIF1 and TP53BP1 act by promoting NHEJ-mediated repair of DSBs. In the same time, RIF1 and TP53BP1 specifically counteract DSBs resection via homologous recombination (HR) during G1 phase. This chain is Telomere-associated protein RIF1, found in Gallus gallus (Chicken).